Reading from the N-terminus, the 284-residue chain is Four and a half LIM domains protein 5 (284 aa).

Residues 8–32 (CQYCMASLLGKKYVLKDDNPYCVSC) form a C4-type zinc finger. LIM zinc-binding domains are found at residues 39–100 (NYCE…ECSS), 101–160 (KCFH…KEFA), 161–220 (HYCS…LYAK), and 223–283 (AACT…VDTD).

Interacts with CREM (via the third LIM domain). Interacts (via second LIM domain) with SPAG8.

The protein resides in the nucleus. Its function is as follows. May be involved in the regulation of spermatogenesis. Stimulates CREM transcriptional activity in a phosphorylation-independent manner. In Bos taurus (Bovine), this protein is Four and a half LIM domains protein 5 (FHL5).